A 237-amino-acid chain; its full sequence is NAD-dependent protein deacetylase (237 aa).

The Deacetylase sirtuin-type domain maps to 1-237 (MFTTSLRQAQ…LVETNRALQK (237 aa)). Residues alanine 18, threonine 22, phenylalanine 29, arginine 30, glutamine 95, aspartate 98, and histidine 113 each coordinate NAD(+). Phenylalanine 29 provides a ligand contact to nicotinamide. Aspartate 98 provides a ligand contact to nicotinamide. Residue histidine 113 is the Proton acceptor of the active site. Residues cysteine 121, cysteine 124, cysteine 140, and cysteine 142 each coordinate Zn(2+). Residues serine 180, serine 181, asparagine 205, and isoleucine 224 each coordinate NAD(+).

The protein belongs to the sirtuin family. Class U subfamily. Zn(2+) is required as a cofactor.

It localises to the cytoplasm. It carries out the reaction N(6)-acetyl-L-lysyl-[protein] + NAD(+) + H2O = 2''-O-acetyl-ADP-D-ribose + nicotinamide + L-lysyl-[protein]. NAD-dependent protein deacetylase which modulates the activities of several enzymes which are inactive in their acetylated form. This is NAD-dependent protein deacetylase from Shouchella clausii (strain KSM-K16) (Alkalihalobacillus clausii).